A 510-amino-acid polypeptide reads, in one-letter code: Lysine--tRNA ligase (510 aa).

Residues glutamate 420 and glutamate 427 each coordinate Mg(2+).

The protein belongs to the class-II aminoacyl-tRNA synthetase family. As to quaternary structure, homodimer. The cofactor is Mg(2+).

It is found in the cytoplasm. The enzyme catalyses tRNA(Lys) + L-lysine + ATP = L-lysyl-tRNA(Lys) + AMP + diphosphate. This chain is Lysine--tRNA ligase, found in Vibrio vulnificus (strain YJ016).